The chain runs to 814 residues: DNA gyrase subunit A (814 aa).

Residues 32 to 499 (LPDVRDGLKP…GVIEFREEDL (468 aa)) form the Topo IIA-type catalytic domain. Tyrosine 120 acts as the O-(5'-phospho-DNA)-tyrosine intermediate in catalysis. Residues 526–532 (QHRAGRG) carry the GyrA-box motif.

It belongs to the type II topoisomerase GyrA/ParC subunit family. Heterotetramer, composed of two GyrA and two GyrB chains. In the heterotetramer, GyrA contains the active site tyrosine that forms a transient covalent intermediate with DNA, while GyrB binds cofactors and catalyzes ATP hydrolysis.

The protein localises to the cytoplasm. It catalyses the reaction ATP-dependent breakage, passage and rejoining of double-stranded DNA.. Functionally, a type II topoisomerase that negatively supercoils closed circular double-stranded (ds) DNA in an ATP-dependent manner to modulate DNA topology and maintain chromosomes in an underwound state. Negative supercoiling favors strand separation, and DNA replication, transcription, recombination and repair, all of which involve strand separation. Also able to catalyze the interconversion of other topological isomers of dsDNA rings, including catenanes and knotted rings. Type II topoisomerases break and join 2 DNA strands simultaneously in an ATP-dependent manner. The sequence is that of DNA gyrase subunit A from Dehalogenimonas lykanthroporepellens (strain ATCC BAA-1523 / JCM 15061 / BL-DC-9).